The primary structure comprises 920 residues: Translation initiation factor IF-2 (920 aa).

The segment at 33–305 (KSASSTVEAP…RGRKSKRAKR (273 aa)) is disordered. The span at 53–86 (SKSAPAPAKSAGNGATAAPATSATPATAAAAAAP) shows a compositional bias: low complexity. Pro residues-rich tracts occupy residues 87–159 (APAP…PAPR), 179–193 (PRPQ…PGTP), and 201–212 (NMPPRPAGPRPG). A compositionally biased stretch (gly residues) spans 225–291 (PGGRGPGGGG…GAAGAFGRPG (67 aa)). A compositionally biased stretch (basic residues) spans 295-304 (KRGRKSKRAK). Residues 416-588 (IRPPVVTVMG…VLLTADASLD (173 aa)) enclose the tr-type G domain. The interval 425–432 (GHVDHGKT) is G1. GTP is bound at residue 425–432 (GHVDHGKT). Residues 450–454 (GITQH) form a G2 region. Residues 475–478 (DTPG) are G3. Residues 475–479 (DTPGH) and 529–532 (NKID) each bind GTP. The G4 stretch occupies residues 529 to 532 (NKID). The interval 565-567 (SAK) is G5.

Belongs to the TRAFAC class translation factor GTPase superfamily. Classic translation factor GTPase family. IF-2 subfamily.

The protein localises to the cytoplasm. Its function is as follows. One of the essential components for the initiation of protein synthesis. Protects formylmethionyl-tRNA from spontaneous hydrolysis and promotes its binding to the 30S ribosomal subunits. Also involved in the hydrolysis of GTP during the formation of the 70S ribosomal complex. The protein is Translation initiation factor IF-2 of Mycobacterium sp. (strain JLS).